The following is a 656-amino-acid chain: MGKPRGRKLLKQQEKDQFKPAKEFDVPDEQDNFDGSNGTDSDPQMFFGVLDREELEYFKHAEATLSMDAFDNAEEKKQFVTNVIEETRGKELKLVISQICSKLMERLILDCDDQQLKSIFKAFNGVFYNLSCHKYASHVLETLLVRGAALVEKELLTPSFDGETDEESFITMENVYLYMLNEVKPHLKAMINHRYASHVLRLLILILASKNLPKTTQNNSTLRSKKSKIARKMIDIKDNDDFDRVHQTPESFKLELKDFLKNLYAGFTNGAASRSDISPTYVTKFRELCVDPVASPVIQLIIQVEGIFDRERSFWRLVFNTTDETDAKEEAFLEYLLSDPVGSHFLENVISFARTKFVERLYNLYMKPKITKLAQRDTTGAFVVQALLRHLKDKEVKEILEELVPQLSMLLNSNIDFGTSIIEASIKEDNYLRDEVINQLLVKYYPEQNENRNILESCLLLSSSTLGNTRDDWPTAEERRRSLFLEQLIGYDSKFVDVTIESMLKLPEERFLQMAYHGVFSHVVEHVLKPTIVDAIKRKLLLNVLCKDVVNMSCNAYGSHIVDKLWEFTAKLTLYKERIANSLLKESDKVKNSSYGKRVWRNWHLDQYVRKPMDWRRIVKEQDVAIFPNAQPLQPKNPLKRPKHTDLPPSKRKGVK.

Residues 1–10 (MGKPRGRKLL) show a composition bias toward basic residues. Residues 1–42 (MGKPRGRKLLKQQEKDQFKPAKEFDVPDEQDNFDGSNGTDSD) are disordered. Residues 11–25 (KQQEKDQFKPAKEFD) show a composition bias toward basic and acidic residues. Residues 33-42 (FDGSNGTDSD) show a composition bias toward polar residues. 8 Pumilio repeats span residues 86 to 121 (ETRG…SIFK), 122 to 157 (AFNG…ELLT), 182 to 217 (EVKP…KTTQ), 280 to 320 (TYVT…LVFN), 328 to 363 (KEEA…RLYN), 364 to 401 (LYMK…EILE), 505 to 542 (KLPE…KLLL), and 543 to 581 (NVLC…RIAN). The segment at 629 to 656 (NAQPLQPKNPLKRPKHTDLPPSKRKGVK) is disordered.

Belongs to the NOP9 family.

Its subcellular location is the nucleus. It is found in the nucleolus. Its function is as follows. RNA-binding nucleolar protein required for pre-rRNA processing. Involved in production of 18S rRNA and assembly of small ribosomal subunit. The protein is Nucleolar protein 9 (NOP9) of Zygosaccharomyces rouxii (strain ATCC 2623 / CBS 732 / NBRC 1130 / NCYC 568 / NRRL Y-229).